The primary structure comprises 415 residues: Putative F-box/FBD/LRR-repeat protein At3g49040 (415 aa).

Residues 10–58 (EDRISELHEALLVHIMSSLPTKTVVATSVLSKRWRHVWKTVQNLKFVSK) enclose the F-box domain. 5 LRR repeats span residues 60–86 (HQTF…DLEF), 87–114 (SNQL…VLDL), 143–170 (TLTL…HLYK), 171–196 (VHFY…IVHR), and 213–241 (RLTI…NIRR). Residues 272–377 (ILESLTSAKR…TSLKKATFST (106 aa)) form the FBD domain.

This is Putative F-box/FBD/LRR-repeat protein At3g49040 from Arabidopsis thaliana (Mouse-ear cress).